Reading from the N-terminus, the 122-residue chain is MAAPVDLELKKAFTELQAKVIDTQQKVKLADIQIEQLNRTKKHAHLTDTEIMTLVDETNMYEGVGRMFILQSKEAIHNQLLEKQKIAEEKIKELEQKKSYLERSVKEAEDNIREMLMARRAQ.

An N-acetylalanine modification is found at Ala-2.

Belongs to the prefoldin subunit beta family. In terms of assembly, heterohexamer of two PFD-alpha type and four PFD-beta type subunits.

Binds specifically to cytosolic chaperonin (c-CPN) and transfers target proteins to it. Binds to nascent polypeptide chain and promotes folding in an environment in which there are many competing pathways for nonnative proteins. In Pongo abelii (Sumatran orangutan), this protein is Prefoldin subunit 1 (PFDN1).